Consider the following 159-residue polypeptide: Eukaryotic translation initiation factor 5A-2 (159 aa).

The segment covering 1 to 10 has biased composition (basic and acidic residues); the sequence is MSDDEHHFEA. The tract at residues 1–25 is disordered; it reads MSDDEHHFEASESGASKTYPQSAGN. Serine 2 bears the Phosphoserine mark. A compositionally biased stretch (polar residues) spans 13-24; the sequence is SGASKTYPQSAG. Position 51 is a hypusine (lysine 51).

Belongs to the eIF-5A family. Homodimer. Interacts with AHK4 and AHP1. Cytokinin regulates the formation of the AHP1-AHK4-ELF5A-2 complex. Post-translationally, lys-51 undergoes hypusination, a unique post-translational modification that consists in the addition of a butylamino group from spermidine to lysine side chain, leading to the formation of the unusual amino acid hypusine. eIF-5As are the only known proteins to undergo this modification, which is essential for their function. As to expression, ubiquitous. In roots, expressed mostly inside the stele of the mature zone.

The protein localises to the cytoplasm. Its subcellular location is the nucleus. Its function is as follows. Translation factor that promotes translation elongation and termination, particularly upon ribosome stalling at specific amino acid sequence contexts. Binds between the exit (E) and peptidyl (P) site of the ribosome and promotes rescue of stalled ribosome: specifically required for efficient translation of polyproline-containing peptides as well as other motifs that stall the ribosome. Acts as a ribosome quality control (RQC) cofactor by joining the RQC complex to facilitate peptidyl transfer during CAT tailing step. Regulates cytokinin-mediated root protoxylem specification and represses secifically the expression of AHP6. Regulates the induction of programmed cell death caused by infection with virulent pathogen. The polypeptide is Eukaryotic translation initiation factor 5A-2 (ELF5A-2) (Arabidopsis thaliana (Mouse-ear cress)).